We begin with the raw amino-acid sequence, 360 residues long: UPF0324 membrane protein plu2856 (360 aa).

Transmembrane regions (helical) follow at residues 20–42 (LIPGLILAAILTAISIYAGNIPW), 47–69 (GLGTLTLAILAGIIVGNTVYPLL), 104–126 (VGITGLLIDAAMLSSTFFIAIWL), 136–155 (QTVILIGAGSSICGAAAIMA), 167–189 (VAVAVSTIVIFGTIAIFIYPWFY), 239–256 (MIRVMMLAPFLLLLSRYI), 277–299 (WFAVIFIAIAGFNSFNLLPAAIV), 304–326 (NIDTIMLTMAMGALGLTTHVSAI), and 333–355 (PILLALILFVWLMAGGLLINLGI).

It belongs to the UPF0324 family.

Its subcellular location is the cell membrane. The protein is UPF0324 membrane protein plu2856 of Photorhabdus laumondii subsp. laumondii (strain DSM 15139 / CIP 105565 / TT01) (Photorhabdus luminescens subsp. laumondii).